Consider the following 235-residue polypeptide: 7-cyano-7-deazaguanine synthase (235 aa).

16 to 26 (FSGGQDSTTCL) provides a ligand contact to ATP. C195, C204, C207, and C210 together coordinate Zn(2+).

It belongs to the QueC family. Zn(2+) serves as cofactor.

The enzyme catalyses 7-carboxy-7-deazaguanine + NH4(+) + ATP = 7-cyano-7-deazaguanine + ADP + phosphate + H2O + H(+). It functions in the pathway purine metabolism; 7-cyano-7-deazaguanine biosynthesis. Catalyzes the ATP-dependent conversion of 7-carboxy-7-deazaguanine (CDG) to 7-cyano-7-deazaguanine (preQ(0)). The chain is 7-cyano-7-deazaguanine synthase from Shewanella frigidimarina (strain NCIMB 400).